Here is a 487-residue protein sequence, read N- to C-terminus: Betaine aldehyde dehydrogenase (487 aa).

The K(+) site is built by Ser26 and Asp93. 150–152 (GAW) is a binding site for NAD(+). Lys162 (charge relay system) is an active-site residue. NAD(+) contacts are provided by residues 176–179 (KPSE) and 229–232 (SVPT). Leu244 contacts K(+). The active-site Proton acceptor is the Glu250. Residues Gly252, Cys284, and Glu384 each contribute to the NAD(+) site. Catalysis depends on Cys284, which acts as the Nucleophile. Cys284 is modified (cysteine sulfenic acid (-SOH)). K(+) contacts are provided by Lys454 and Gly457. The active-site Charge relay system is the Glu461.

This sequence belongs to the aldehyde dehydrogenase family. Dimer of dimers. K(+) serves as cofactor.

It carries out the reaction betaine aldehyde + NAD(+) + H2O = glycine betaine + NADH + 2 H(+). The protein operates within amine and polyamine biosynthesis; betaine biosynthesis via choline pathway; betaine from betaine aldehyde: step 1/1. In terms of biological role, involved in the biosynthesis of the osmoprotectant glycine betaine. Catalyzes the irreversible oxidation of betaine aldehyde to the corresponding acid. The chain is Betaine aldehyde dehydrogenase from Rhizobium etli (strain ATCC 51251 / DSM 11541 / JCM 21823 / NBRC 15573 / CFN 42).